The chain runs to 298 residues: 2-dehydropantoate 2-reductase (298 aa).

Residues 7–12, Asn-98, and Ala-124 each bind NADP(+); that span reads GGGSVG. Position 98 (Asn-98) interacts with substrate. Lys-179 functions as the Proton donor in the catalytic mechanism. Substrate is bound by residues Asn-183, Asn-187, Asn-197, and Ser-246. Residue Glu-258 participates in NADP(+) binding.

Belongs to the ketopantoate reductase family.

It is found in the cytoplasm. The enzyme catalyses (R)-pantoate + NADP(+) = 2-dehydropantoate + NADPH + H(+). It participates in cofactor biosynthesis; (R)-pantothenate biosynthesis; (R)-pantoate from 3-methyl-2-oxobutanoate: step 2/2. Catalyzes the NADPH-dependent reduction of ketopantoate into pantoic acid. The sequence is that of 2-dehydropantoate 2-reductase (panE) from Bacillus subtilis (strain 168).